A 250-amino-acid chain; its full sequence is Flavin-dependent thymidylate synthase (250 aa).

Residues 7–233 form the ThyX domain; the sequence is LRVQLIAKTD…PAVFADFEVT (227 aa). FAD contacts are provided by residues serine 71, 95–97, and glutamine 103; that span reads RHR. Residues 92-95, 103-107, and arginine 172 each bind dUMP; these read ELIR and QLSQR. The short motif at 95 to 105 is the ThyX motif element; it reads RHRHFSYSQLS. Residues 188-190 and histidine 194 contribute to the FAD site; that span reads NYR. Arginine 199 serves as a coordination point for dUMP. Arginine 199 functions as the Involved in ionization of N3 of dUMP, leading to its activation in the catalytic mechanism.

This sequence belongs to the thymidylate synthase ThyX family. In terms of assembly, homotetramer. Requires FAD as cofactor.

The catalysed reaction is dUMP + (6R)-5,10-methylene-5,6,7,8-tetrahydrofolate + NADPH + H(+) = dTMP + (6S)-5,6,7,8-tetrahydrofolate + NADP(+). The protein operates within pyrimidine metabolism; dTTP biosynthesis. Catalyzes the reductive methylation of 2'-deoxyuridine-5'-monophosphate (dUMP) to 2'-deoxythymidine-5'-monophosphate (dTMP) while utilizing 5,10-methylenetetrahydrofolate (mTHF) as the methyl donor, and NADPH and FADH(2) as the reductant. This Mycobacterium bovis (strain ATCC BAA-935 / AF2122/97) protein is Flavin-dependent thymidylate synthase.